The sequence spans 212 residues: tRNA (guanine-N(7)-)-methyltransferase (212 aa).

S-adenosyl-L-methionine contacts are provided by Glu-44, Asp-69, Asp-96, and Asp-118. Residue Asp-118 is part of the active site. Lys-122 contacts substrate. Residues 124-129 (RHEKRR) form an interaction with RNA region. Substrate is bound by residues Asp-154 and 191 to 194 (TEYE).

This sequence belongs to the class I-like SAM-binding methyltransferase superfamily. TrmB family.

The catalysed reaction is guanosine(46) in tRNA + S-adenosyl-L-methionine = N(7)-methylguanosine(46) in tRNA + S-adenosyl-L-homocysteine. The protein operates within tRNA modification; N(7)-methylguanine-tRNA biosynthesis. In terms of biological role, catalyzes the formation of N(7)-methylguanine at position 46 (m7G46) in tRNA. The polypeptide is tRNA (guanine-N(7)-)-methyltransferase (Streptococcus gordonii (strain Challis / ATCC 35105 / BCRC 15272 / CH1 / DL1 / V288)).